The sequence spans 196 residues: UPF0134 protein MPN_501 (196 aa).

The protein belongs to the UPF0134 family.

In Mycoplasma pneumoniae (strain ATCC 29342 / M129 / Subtype 1) (Mycoplasmoides pneumoniae), this protein is UPF0134 protein MPN_501.